Consider the following 468-residue polypeptide: Ribulose bisphosphate carboxylase large chain (468 aa).

Lys7 is modified (N6,N6,N6-trimethyllysine). Substrate is bound by residues Asn116 and Thr166. Lys168 (proton acceptor) is an active-site residue. Lys170 lines the substrate pocket. Lys194, Asp196, and Glu197 together coordinate Mg(2+). Lys194 carries the post-translational modification N6-carboxylysine. His287 serves as the catalytic Proton acceptor. 3 residues coordinate substrate: Arg288, His320, and Ser372.

Belongs to the RuBisCO large chain family. Type I subfamily. Heterohexadecamer of 8 large chains and 8 small chains. Mg(2+) serves as cofactor.

It is found in the plastid. Its subcellular location is the chloroplast. The catalysed reaction is 2 (2R)-3-phosphoglycerate + 2 H(+) = D-ribulose 1,5-bisphosphate + CO2 + H2O. It carries out the reaction D-ribulose 1,5-bisphosphate + O2 = 2-phosphoglycolate + (2R)-3-phosphoglycerate + 2 H(+). Functionally, ruBisCO catalyzes two reactions: the carboxylation of D-ribulose 1,5-bisphosphate, the primary event in carbon dioxide fixation, as well as the oxidative fragmentation of the pentose substrate in the photorespiration process. Both reactions occur simultaneously and in competition at the same active site. This is Ribulose bisphosphate carboxylase large chain from Couroupita guianensis (Cannonball tree).